The primary structure comprises 243 residues: UPF0280 protein Memar_1519 (243 aa).

The protein belongs to the UPF0280 family.

This Methanoculleus marisnigri (strain ATCC 35101 / DSM 1498 / JR1) protein is UPF0280 protein Memar_1519.